Consider the following 1039-residue polypeptide: FERM domain-containing protein 4A (1039 aa).

The region spanning 20–322 (RRCQVHLLDD…SQHQFYLDRK (303 aa)) is the FERM domain. The interval 358-420 (KGKIISGSSG…KLCLREAELT (63 aa)) is necessary for interaction with CYTH1. Residues 366–382 (SGSLLSSGSQESDSSQS) are compositionally biased toward low complexity. The tract at residues 366 to 386 (SGSLLSSGSQESDSSQSAKKD) is disordered. Residues 382 to 416 (SAKKDMLAALKSRQEALEETLRQRLEELKKLCLRE) are a coiled coil. Position 530 is a phosphoserine (Ser530). The disordered stretch occupies residues 553 to 680 (DEDSQVTSTI…MPSTPDLRVR (128 aa)). Over residues 571 to 586 (GLPPRPPSHNRPPPPQ) the composition is skewed to pro residues. The tract at residues 579–939 (HNRPPPPQSL…QWYQRSTASH (361 aa)) is necessary for tight junction and adherens junction localization; Requires for interaction with PARD3. Phosphoserine occurs at positions 604 and 615. Residues 623–638 (VKKRSSHSHSSSHKRF) show a composition bias toward basic residues. Phosphoserine is present on residues Ser681 and Ser711. 2 disordered regions span residues 713–756 (ESQG…HSSS) and 772–813 (AEDS…AGGA). A compositionally biased stretch (low complexity) spans 788-800 (RAAGALGSASSGS). 3 positions are modified to phosphoserine: Ser800, Ser872, and Ser901. Disordered regions lie at residues 879–968 (FKES…STFV) and 980–1039 (CKAT…STDE). Positions 896 to 905 (LTPSRSQILR) are enriched in polar residues. A compositionally biased stretch (basic and acidic residues) spans 912–929 (EGAHDKGAGRAAVSDELR). Positions 946-966 (SHTSSTSSDSGSQYSTSSQST) are enriched in low complexity. Composition is skewed to polar residues over residues 986-1000 (ALPQ…SSEI) and 1013-1023 (TWQTGEATENS).

Interacts (via coiled-coil domain) with CYTH1 (via coiled-coil domain). Interacts with PARD3 (via coiled-coil domain). Found in a complex with PARD3, CYTH1 and FRMD4A. Interacts with CYTH2. Interacts with CYTH3.

The protein resides in the cytoplasm. Its subcellular location is the cytoskeleton. The protein localises to the cell junction. It localises to the adherens junction. It is found in the tight junction. Functionally, scaffolding protein that regulates epithelial cell polarity by connecting ARF6 activation with the PAR3 complex. Plays a redundant role with FRMD4B in epithelial polarization. May regulate MAPT secretion by activating ARF6-signaling. The polypeptide is FERM domain-containing protein 4A (Homo sapiens (Human)).